We begin with the raw amino-acid sequence, 248 residues long: 2,3-bisphosphoglycerate-dependent phosphoglycerate mutase 2 (248 aa).

Substrate contacts are provided by residues Arg-8–Asn-15, Thr-21–Gly-22, Arg-60, Glu-87–Tyr-90, Lys-98, Arg-114–Arg-115, and Gly-183–Asn-184. Catalysis depends on His-9, which acts as the Tele-phosphohistidine intermediate. The active-site Proton donor/acceptor is the Glu-87.

This sequence belongs to the phosphoglycerate mutase family. BPG-dependent PGAM subfamily.

It carries out the reaction (2R)-2-phosphoglycerate = (2R)-3-phosphoglycerate. Its pathway is carbohydrate degradation; glycolysis; pyruvate from D-glyceraldehyde 3-phosphate: step 3/5. Its function is as follows. Catalyzes the interconversion of 2-phosphoglycerate and 3-phosphoglycerate. In Bacteroides thetaiotaomicron (strain ATCC 29148 / DSM 2079 / JCM 5827 / CCUG 10774 / NCTC 10582 / VPI-5482 / E50), this protein is 2,3-bisphosphoglycerate-dependent phosphoglycerate mutase 2.